Consider the following 751-residue polypeptide: Zinc finger protein 337 (751 aa).

In terms of domain architecture, KRAB spans 12–83 (LAFGDVTVDF…ERRRRPGPCA (72 aa)). Residues 101–116 (QRQQQLQFSDQSFQSD) are compositionally biased toward low complexity. The tract at residues 101-163 (QRQQQLQFSD…SSQGQRENPT (63 aa)) is disordered. Residues 180–202 (FKCAERGQDFSRKMMVIIHKKAH) form a C2H2-type 1; degenerate zinc finger. 9 C2H2-type zinc fingers span residues 208–230 (FTCR…QNTH), 236–258 (YVCS…QRTH), 264–286 (FLCK…ERTH), 292–314 (YECQ…LKAH), 320–342 (FVCK…KRIH), 348–370 (YRCQ…QRTH), 376–398 (FACR…QRTH), 404–426 (FVCK…QRTH), and 432–454 (FVCR…QITH). Lys-458 is covalently cross-linked (Glycyl lysine isopeptide (Lys-Gly) (interchain with G-Cter in SUMO2)). C2H2-type zinc fingers lie at residues 460 to 482 (FVCK…QRTH), 488 to 510 (YGCR…LRAH), 516 to 538 (FFCR…QRTH), 544 to 566 (FMCK…QWTH), 572 to 594 (FNCK…QKTH), 600 to 622 (FICS…QLAH), 628 to 650 (FVCK…QRTH), 656 to 679 (FVCN…WRIH), 685 to 707 (FVCQ…ERIH), and 713 to 735 (YECQ…LKRH).

This sequence belongs to the krueppel C2H2-type zinc-finger protein family.

It localises to the nucleus. May be involved in transcriptional regulation. The sequence is that of Zinc finger protein 337 (ZNF337) from Homo sapiens (Human).